Reading from the N-terminus, the 218-residue chain is ATP phosphoribosyltransferase (218 aa).

Belongs to the ATP phosphoribosyltransferase family. Short subfamily. Heteromultimer composed of HisG and HisZ subunits.

Its subcellular location is the cytoplasm. It carries out the reaction 1-(5-phospho-beta-D-ribosyl)-ATP + diphosphate = 5-phospho-alpha-D-ribose 1-diphosphate + ATP. Its pathway is amino-acid biosynthesis; L-histidine biosynthesis; L-histidine from 5-phospho-alpha-D-ribose 1-diphosphate: step 1/9. Functionally, catalyzes the condensation of ATP and 5-phosphoribose 1-diphosphate to form N'-(5'-phosphoribosyl)-ATP (PR-ATP). Has a crucial role in the pathway because the rate of histidine biosynthesis seems to be controlled primarily by regulation of HisG enzymatic activity. In Burkholderia thailandensis (strain ATCC 700388 / DSM 13276 / CCUG 48851 / CIP 106301 / E264), this protein is ATP phosphoribosyltransferase.